A 519-amino-acid chain; its full sequence is Berghepain-1 (519 aa).

At 1-32 the chain is on the cytoplasmic side; that stretch reads MINDIRRINITTSSIESLNENSKYLKRNHKRT. The helical; Signal-anchor for type II membrane protein transmembrane segment at 33 to 53 threads the bilayer; sequence IKICAYAITTFALFFIVVVYF. The Lumenal portion of the chain corresponds to 54 to 519; that stretch reads KNQTNVNDAN…IGIDVFFPIL (466 aa). Residues Asn55 and Asn143 are each glycosylated (N-linked (GlcNAc...) asparagine). 4 disulfides stabilise this stretch: Cys298–Cys340, Cys333–Cys373, Cys358–Cys378, and Cys427–Cys508. Cys301 is a catalytic residue. N-linked (GlcNAc...) asparagine glycosylation is present at Asn432. Residues His433 and Asn483 contribute to the active site.

This sequence belongs to the peptidase C1 family.

It localises to the membrane. In terms of biological role, cysteine protease. Required for host hepatocyte-derived merozoite infectivity and to a lesser extent for host erythrocyte-derived merozoite infectivity. The protein is Berghepain-1 of Plasmodium berghei (strain Anka).